A 173-amino-acid polypeptide reads, in one-letter code: Calcium-binding protein 5 (173 aa).

4 consecutive EF-hand domains span residues 28-63, 82-99, 105-140, and 142-173; these read DELD…MGYM, GRVD…KLLA, IGVQ…LLGE, and LTPR…MMSR. Ca(2+)-binding residues include D41, D43, D45, and D52. Ca(2+) contacts are provided by D118, N120, D122, E124, E129, D155, N157, D159, T161, and E166.

In terms of assembly, interacts with CACNA1C (via C-terminal CDB motif) in a calcium-dependent manner. Interacts with STXBP1. Interacts with MYO6. As to expression, expressed in inner and outer plexiform layers of the retina, and retinal bipolar cells (at protein level). Expressed in the inner hair cells (IHC) of the cochlea.

Its subcellular location is the cytoplasm. Functionally, inhibits calcium-dependent inactivation of L-type calcium channel and shifts voltage dependence of activation to more depolarized membrane potentials. Involved in the transmission of light signals. May positively regulate neurotransmitter vesicle endocytosis and exocytosis in a salt-dependent manner. May play a role in the extension and network organization of neurites. In Mus musculus (Mouse), this protein is Calcium-binding protein 5 (Cabp5).